Consider the following 291-residue polypeptide: Gamma-sarcoglycan (291 aa).

Topologically, residues 1–37 (MVREQYTTATEGICIERPENQYVYKIGIYGWRKRCLY) are cytoplasmic. A helical; Signal-anchor for type II membrane protein transmembrane segment spans residues 38–58 (LFVLLLLIILVVNLALTIWIL). The Extracellular segment spans residues 59 to 291 (KVMWFSPAGM…TCQEHNHICL (233 aa)). N-linked (GlcNAc...) asparagine glycosylation is present at N110. Intrachain disulfides connect C265/C290 and C267/C283.

Belongs to the sarcoglycan beta/delta/gamma/zeta family. Interacts with the syntrophin SNTA1. Cross-link to form 2 major subcomplexes: one consisting of SGCB, SGCD and SGCG and the other consisting of SGCB and SGCD. The association between SGCB and SGCG is particularly strong while SGCA is loosely associated with the other sarcoglycans. Interacts with FLNC. As to expression, expressed in skeletal and heart muscle.

Its subcellular location is the cell membrane. It is found in the sarcolemma. The protein localises to the cytoplasm. It localises to the cytoskeleton. Functionally, component of the sarcoglycan complex, a subcomplex of the dystrophin-glycoprotein complex which forms a link between the F-actin cytoskeleton and the extracellular matrix. The protein is Gamma-sarcoglycan (SGCG) of Homo sapiens (Human).